The sequence spans 337 residues: Calcium-binding protein 39-like (337 aa).

It belongs to the Mo25 family. Component of a trimeric complex composed of STK11/LKB1, STRAD (STRADA or STRADB) and CAB39/MO25 (CAB39/MO25alpha or CAB39L/MO25beta): the complex tethers STK11/LKB1 in the cytoplasm and stimulates its catalytic activity.

In terms of biological role, component of a complex that binds and activates STK11/LKB1. In the complex, required to stabilize the interaction between CAB39/MO25 (CAB39/MO25alpha or CAB39L/MO25beta) and STK11/LKB1. The protein is Calcium-binding protein 39-like (Cab39l) of Mus musculus (Mouse).